The following is a 206-amino-acid chain: Putative type I restriction enzyme MpnIIP endonuclease subunit C-terminal part (206 aa).

In terms of biological role, the C-terminal section of a putative type I restriction enzyme that if reconstituted might recognize 5'-GAN(7)TAY-3' and cleave a random distance away. Subunit R is required for both nuclease and ATPase activities, but not for modification. This Mycoplasma pneumoniae (strain ATCC 29342 / M129 / Subtype 1) (Mycoplasmoides pneumoniae) protein is Putative type I restriction enzyme MpnIIP endonuclease subunit C-terminal part.